Here is a 397-residue protein sequence, read N- to C-terminus: MKEKVVLAYSGGLDTSIIIPWLKENYDLDVIAVCVNVGQGDDMDYVKTKAIKSGASKIYVEDVKEEFVVDYLYKAIKSEALYEQDYMLGTSFARPLMAKKLVEIAHKEQAKYICHGCTGKGNDQVRFEVGVKAQDPIIKIIAPWRIWDIKSREDAIDYAKKVGVEVPVTKKKIYSVDKNLWHVSHEGGDLEDLKNEHKEDMYFMVTPPEKAKNEPTYLEIYFEKGAPVKINGEVLNPVDIIDKLNTIGGENGIGIADIIENRLVGMKSRGIYETPAGTLLYAAHKKLESVTLDKYTYQYKKIVSAQYGELVYNGLWFTSLREAIDAFVDKTQENVTGTVQLKLYKGNIKPCSVDTEYALYDEGISSFGESELYSHKDAEGFINLFGLPSKIKALKNF.

8–16 (AYSGGLDTS) provides a ligand contact to ATP. Residues Tyr-86 and Ser-91 each coordinate L-citrulline. Gly-116 contributes to the ATP binding site. Residues Thr-118, Asn-122, and Asp-123 each coordinate L-aspartate. Asn-122 contacts L-citrulline. Residues Arg-126, Ser-175, Ser-184, Glu-260, and Tyr-272 each contribute to the L-citrulline site.

This sequence belongs to the argininosuccinate synthase family. Type 1 subfamily. Homotetramer.

The protein localises to the cytoplasm. It carries out the reaction L-citrulline + L-aspartate + ATP = 2-(N(omega)-L-arginino)succinate + AMP + diphosphate + H(+). It participates in amino-acid biosynthesis; L-arginine biosynthesis; L-arginine from L-ornithine and carbamoyl phosphate: step 2/3. This is Argininosuccinate synthase from Clostridium botulinum (strain Kyoto / Type A2).